The primary structure comprises 170 residues: Brassinosteroid-responsive RING protein 1 (170 aa).

A helical transmembrane segment spans residues 15-37 (LFVQTLSILGFIRTIVFSIFRFL). An RING-type; atypical zinc finger spans residues 94-137 (CAVCLYEFEGEQEIRWLRNCRHIFHRSCLDRWMDHDQKTCPLCR).

This sequence belongs to the RING-type zinc finger family. As to expression, highly expressed in stems, rosette leaves and siliques, and moderately expressed in roots, cauline leaves and flower. Detected at low levels in seeds.

It localises to the membrane. In terms of biological role, may be involved in the brassinosteroids (BRs) signaling pathway and regulate the growth and development of rosette leaves. Seems to prevent over development of leaves and inflorescence stems. This chain is Brassinosteroid-responsive RING protein 1, found in Arabidopsis thaliana (Mouse-ear cress).